The following is a 307-amino-acid chain: Thioredoxin reductase (307 aa).

Position 34-41 (34-41 (ESKAHGGQ)) interacts with FAD. C134 and C137 are disulfide-bonded. Position 275–284 (275–284 (DVRAKSFRQV)) interacts with FAD.

Belongs to the class-II pyridine nucleotide-disulfide oxidoreductase family. In terms of assembly, homodimer. Requires FAD as cofactor.

It is found in the cytoplasm. The catalysed reaction is [thioredoxin]-dithiol + NADP(+) = [thioredoxin]-disulfide + NADPH + H(+). In Treponema pallidum (strain Nichols), this protein is Thioredoxin reductase (trxB).